Reading from the N-terminus, the 639-residue chain is uncharacterized protein (639 aa).

This is an uncharacterized protein from Mus musculus (Mouse).